Consider the following 193-residue polypeptide: Peptidyl-tRNA hydrolase (193 aa).

Residue Tyr-16 participates in tRNA binding. The active-site Proton acceptor is His-21. TRNA contacts are provided by Phe-67, Asn-69, and Asn-115.

Belongs to the PTH family. Monomer.

The protein resides in the cytoplasm. It catalyses the reaction an N-acyl-L-alpha-aminoacyl-tRNA + H2O = an N-acyl-L-amino acid + a tRNA + H(+). In terms of biological role, hydrolyzes ribosome-free peptidyl-tRNAs (with 1 or more amino acids incorporated), which drop off the ribosome during protein synthesis, or as a result of ribosome stalling. Catalyzes the release of premature peptidyl moieties from peptidyl-tRNA molecules trapped in stalled 50S ribosomal subunits, and thus maintains levels of free tRNAs and 50S ribosomes. In Baumannia cicadellinicola subsp. Homalodisca coagulata, this protein is Peptidyl-tRNA hydrolase.